Here is a 199-residue protein sequence, read N- to C-terminus: DNA repair RAD52-like protein 2, chloroplastic (199 aa).

The N-terminal 40 residues, 1–40 (MALQVQQTSAAFTISSPSTAAARIKLSPFRTVAVNRGVRC), are a transit peptide targeting the chloroplast. Position 41 is an N-acetylserine (S41).

This sequence belongs to the RAD52 family. As to expression, expressed in roots and shoots. Expressed at low levels in cauline leaves, flower buds, flowers and siliques.

Its subcellular location is the plastid. The protein resides in the chloroplast. Functionally, involved in double-stranded DNA break repair. This Arabidopsis thaliana (Mouse-ear cress) protein is DNA repair RAD52-like protein 2, chloroplastic.